Here is an 885-residue protein sequence, read N- to C-terminus: MGCLGNQLLIALLLVSVLEICCVQYVTVFYGVPAWKNATIPLFCATKNRDTWGTTQCLPDNDDYSELAINVTEAFDAWDNTVTEQAIEDVWNLFETSIKPCVKLTPLCIAMRCNKTETDRWGLTGNAGTTTTAITTTATPSVAENVINESNPCIKNNSCAGLEQEPMIGCKFNMTGLNRDKKKEYNETWYSRDLICEQSANESESKCYMHHCNTSVIQESCDKHYWDAIRFRYCAPPGYALLRCNDSNYLGFAPNCSKVVVSSCTRMMETQTSTWFGFNGTRAENRTYIYWHGKSNRTIISLNKYYNLTMRCRRPENKTVLPVTIMSGLVFHSQPINERPKQAWCWFEGSWKKAIQEVKETLVKHPRYTGTNDTRKINLTAPAGGDPEVTFMWTNCRGEFLYCKMNWFLNWVEDRDQKGGRWKQQNRKEQQKKNYVPCHIRQIINTWHKVGKNVYLPPREGDLTCNSTVTSLIAEIDWINSNETNITMSAEVAELYRLELGDYKLIEITPIGLAPTSVRRYTTTGASRNKRGVFVLGFLGFLATAGSAMGAASVTLSAQSRTLLAGIVQQQQQLLDVVKRQQELLRLTVWGTKNLQTRVTAIEKYLKDQAQLNSWGCAFRQVCHTTVPWPNETLVPNWNNMTWQEWERQVDFLEANITQLLEEAQIQQEKNMYELQKLNSWDIFGNWFDLTSWIRYIQYGVLIVLGVIGLRIVIYVVQMLARLRQGYRPVFSSPPAYVQQIPIHKGQEPPTKEGEEGDGGDRGGSRSWPWQIEYIHFLIRQLIRLLTWLFSSCRDWLLRSYQILQPVLQSLSTTLQRVREVIRIEIAYLQYGWRYFQEAVQAWWKLARETLASAWGDIWETLGRVGRGILAIPRRIRQGLELTLL.

Positions 1–23 (MGCLGNQLLIALLLVSVLEICCV) are cleaved as a signal peptide. Residues 24–700 (QYVTVFYGVP…TSWIRYIQYG (677 aa)) are Extracellular-facing. N-linked (GlcNAc...) asparagine; by host glycosylation is present at N37. Residues C44 and C57 are joined by a disulfide bond. 17 N-linked (GlcNAc...) asparagine; by host glycosylation sites follow: N70, N114, N148, N156, N173, N186, N201, N213, N245, N255, N279, N285, N296, N307, N317, N372, and N378. 5 disulfide bridges follow: C101-C221, C108-C212, C113-C170, C234-C264, and C244-C256. The tract at residues 113-169 (CNKTETDRWGLTGNAGTTTTAITTTATPSVAENVINESNPCIKNNSCAGLEQEPMIG) is V1. The segment at 170–212 (CKFNMTGLNRDKKKEYNETWYSRDLICEQSANESESKCYMHHC) is V2. Residues 312–344 (CRRPENKTVLPVTIMSGLVFHSQPINERPKQAW) are V3. C312 and C345 are joined by a disulfide. 2 disulfides stabilise this stretch: C396–C465 and C403–C438. The tract at residues 403–438 (CKMNWFLNWVEDRDQKGGRWKQQNRKEQQKKNYVPC) is V4. Residues N466, N482, and N485 are each glycosylated (N-linked (GlcNAc...) asparagine; by host). Positions 481 to 488 (SNETNITM) are V5. The segment at 532-552 (GVFVLGFLGFLATAGSAMGAA) is fusion peptide. Positions 595–611 (LQTRVTAIEKYLKDQAQ) are immunosuppression. N631, N640, and N656 each carry an N-linked (GlcNAc...) asparagine; by host glycan. A coiled-coil region spans residues 640-672 (NMTWQEWERQVDFLEANITQLLEEAQIQQEKNM). The tract at residues 677–698 (KLNSWDIFGNWFDLTSWIRYIQ) is MPER; binding to GalCer. The helical transmembrane segment at 701-721 (VLIVLGVIGLRIVIYVVQMLA) threads the bilayer. Residues 722 to 885 (RLRQGYRPVF…IRQGLELTLL (164 aa)) are Cytoplasmic-facing. Positions 727 to 730 (YRPV) match the YXXV motif; contains endocytosis signal motif. The disordered stretch occupies residues 743–764 (IHKGQEPPTKEGEEGDGGDRGG). Basic and acidic residues predominate over residues 745–764 (KGQEPPTKEGEEGDGGDRGG). C793 carries S-palmitoyl cysteine; by host lipidation. The Di-leucine internalization motif motif lies at 884–885 (LL).

In terms of assembly, the mature envelope protein (Env) consists of a homotrimer of non-covalently associated gp120-gp41 heterodimers. The resulting complex protrudes from the virus surface as a spike. Interacts with host CD4 and CCR5. Gp120 also interacts with the C-type lectins CD209/DC-SIGN and CLEC4M/DC-SIGNR (collectively referred to as DC-SIGN(R)). As to quaternary structure, the mature envelope protein (Env) consists of a homotrimer of non-covalently associated gp120-gp41 heterodimers. The resulting complex protrudes from the virus surface as a spike. In terms of processing, specific enzymatic cleavages in vivo yield mature proteins. Envelope glycoproteins are synthesized as an inactive precursor that is heavily N-glycosylated and processed likely by host cell furin in the Golgi to yield the mature SU and TM proteins. The cleavage site between SU and TM requires the minimal sequence [KR]-X-[KR]-R. Palmitoylation of the transmembrane protein and of Env polyprotein (prior to its proteolytic cleavage) is essential for their association with host cell membrane lipid rafts. Palmitoylation is therefore required for envelope trafficking to classical lipid rafts, but not for viral replication.

Its subcellular location is the virion membrane. The protein localises to the host cell membrane. It localises to the host endosome membrane. Its function is as follows. The surface protein gp120 (SU) attaches the virus to the host lymphoid cell by binding to the primary receptor CD4. This interaction induces a structural rearrangement creating a high affinity binding site for a chemokine coreceptor like CCR5. This peculiar 2 stage receptor-interaction strategy allows gp120 to maintain the highly conserved coreceptor-binding site in a cryptic conformation, protected from neutralizing antibodies. These changes are transmitted to the transmembrane protein gp41 and are thought to activate its fusogenic potential by unmasking its fusion peptide. Functionally, surface protein gp120 (SU) may target the virus to gut-associated lymphoid tissue (GALT) by binding host ITGA4/ITGB7 (alpha-4/beta-7 integrins), a complex that mediates T-cell migration to the GALT. Interaction between gp120 and ITGA4/ITGB7 would allow the virus to enter GALT early in the infection, infecting and killing most of GALT's resting CD4+ T-cells. This T-cell depletion is believed to be the major insult to the host immune system leading to AIDS. In terms of biological role, the surface protein gp120 is a ligand for CD209/DC-SIGN and CLEC4M/DC-SIGNR, which are respectively found on dendritic cells (DCs), and on endothelial cells of liver sinusoids and lymph node sinuses. These interactions allow capture of viral particles at mucosal surfaces by these cells and subsequent transmission to permissive cells. DCs are professional antigen presenting cells, critical for host immunity by inducing specific immune responses against a broad variety of pathogens. They act as sentinels in various tissues where they take up antigen, process it, and present it to T-cells following migration to lymphoid organs. SIV subverts the migration properties of dendritic cells to gain access to CD4+ T-cells in lymph nodes. Virus transmission to permissive T-cells occurs either in trans (without DCs infection, through viral capture and transmission), or in cis (following DCs productive infection, through the usual CD4-gp120 interaction), thereby inducing a robust infection. In trans infection, bound virions remain infectious over days and it is proposed that they are not degraded, but protected in non-lysosomal acidic organelles within the DCs close to the cell membrane thus contributing to the viral infectious potential during DCs' migration from the periphery to the lymphoid tissues. On arrival at lymphoid tissues, intact virions recycle back to DCs' cell surface allowing virus transmission to CD4+ T-cells. Virion capture also seems to lead to MHC-II-restricted viral antigen presentation, and probably to the activation of SIV-specific CD4+ cells. The transmembrane protein gp41 (TM) acts as a class I viral fusion protein. Under the current model, the protein has at least 3 conformational states: pre-fusion native state, pre-hairpin intermediate state, and post-fusion hairpin state. During fusion of viral and target intracellular membranes, the coiled coil regions (heptad repeats) assume a trimer-of-hairpins structure, positioning the fusion peptide in close proximity to the C-terminal region of the ectodomain. The formation of this structure appears to drive apposition and subsequent fusion of viral and target cell membranes. Complete fusion occurs in host cell endosomes. The virus undergoes clathrin-dependent internalization long before endosomal fusion, thus minimizing the surface exposure of conserved viral epitopes during fusion and reducing the efficacy of inhibitors targeting these epitopes. Membranes fusion leads to delivery of the nucleocapsid into the cytoplasm. Its function is as follows. The envelope glycoprotein gp160 precursor down-modulates cell surface CD4 antigen by interacting with it in the endoplasmic reticulum and blocking its transport to the cell surface. Functionally, the gp120-gp41 heterodimer allows rapid transcytosis of the virus through CD4 negative cells such as simple epithelial monolayers of the intestinal, rectal and endocervical epithelial barriers. Both gp120 and gp41 specifically recognize glycosphingolipids galactosyl-ceramide (GalCer) or 3' sulfo-galactosyl-ceramide (GalS) present in the lipid rafts structures of epithelial cells. Binding to these alternative receptors allows the rapid transcytosis of the virus through the epithelial cells. This transcytotic vesicle-mediated transport of virions from the apical side to the basolateral side of the epithelial cells does not involve infection of the cells themselves. This Cercopithecidae (Old World monkeys) protein is Envelope glycoprotein gp160 (env).